Consider the following 128-residue polypeptide: Ribonuclease P protein component (128 aa).

Belongs to the RnpA family. In terms of assembly, consists of a catalytic RNA component (M1 or rnpB) and a protein subunit.

The catalysed reaction is Endonucleolytic cleavage of RNA, removing 5'-extranucleotides from tRNA precursor.. In terms of biological role, RNaseP catalyzes the removal of the 5'-leader sequence from pre-tRNA to produce the mature 5'-terminus. It can also cleave other RNA substrates such as 4.5S RNA. The protein component plays an auxiliary but essential role in vivo by binding to the 5'-leader sequence and broadening the substrate specificity of the ribozyme. The polypeptide is Ribonuclease P protein component (Rhizobium meliloti (strain 1021) (Ensifer meliloti)).